A 246-amino-acid polypeptide reads, in one-letter code: Virulence plasmid protein pGP6-D (246 aa).

The protein belongs to the UPF0137 (pGP6-D) family.

This chain is Virulence plasmid protein pGP6-D, found in Chlamydia psittaci (Chlamydophila psittaci).